An 88-amino-acid chain; its full sequence is Small ribosomal subunit protein bS20 (88 aa).

The interval 1-33 (MANTSSAKKATRKIARRTAVNKSRRTQMRGSVR) is disordered.

It belongs to the bacterial ribosomal protein bS20 family.

In terms of biological role, binds directly to 16S ribosomal RNA. This is Small ribosomal subunit protein bS20 from Rhodopseudomonas palustris (strain BisB5).